The primary structure comprises 309 residues: MERALGVGIGPLAAGTVGLLILLKVIQRLRRRPNIQDKVVVITGASSGLGKECARVFHAAGARLILCGRDQRRLQEVVEELGNKTYGKTKTYTPCTVTFDLSNTSVVCSAAAEILKRHGHVDVLINIAGVSYRGNILDTHVSVQREVMETNYFGPVALTQAILPSMVDRGSGHIVVISSVQGKISIPYRSAYAASKHAMQAYYDCLRAEVDSLGLHVSVLSPGYVRTNMSINAVTGDGSKYGVMDRTTATGADPVDVAKDILKAVCQKKKDVVMAGLGPTTAIYLRTLWPALYFRVMASRARKQTGKEE.

At 1-5 (MERAL) the chain is on the cytoplasmic side. A helical; Signal-anchor for type II membrane protein transmembrane segment spans residues 6-26 (GVGIGPLAAGTVGLLILLKVI). At 27 to 271 (QRLRRRPNIQ…LKAVCQKKKD (245 aa)) the chain is on the lumenal side. 2 residues coordinate NAD(+): serine 47 and leucine 49. Serine 179 serves as a coordination point for substrate. Residues tyrosine 192, lysine 196, and threonine 227 each coordinate NAD(+). Tyrosine 192 functions as the Proton acceptor in the catalytic mechanism.

Belongs to the short-chain dehydrogenases/reductases (SDR) family.

The protein resides in the endoplasmic reticulum membrane. In terms of biological role, putative oxidoreductase. This is Dehydrogenase/reductase SDR family member 7B (dhrs7b) from Danio rerio (Zebrafish).